The chain runs to 38 residues: Photosystem II reaction center protein Y (38 aa).

Residues 5–23 (VVVVLAPVIIAGSWAIFNI) form a helical membrane-spanning segment.

The protein belongs to the PsbY family. As to quaternary structure, PSII is composed of 1 copy each of membrane proteins PsbA, PsbB, PsbC, PsbD, PsbE, PsbF, PsbH, PsbI, PsbJ, PsbK, PsbL, PsbM, PsbT, PsbX, PsbY, PsbZ, Psb30/Ycf12, peripheral proteins PsbO, CyanoQ (PsbQ), PsbU, PsbV and a large number of cofactors. It forms dimeric complexes.

It localises to the cellular thylakoid membrane. Its function is as follows. Loosely associated component of the core of photosystem II (PSII), it is not always seen in crystals. PSII is a light-driven water plastoquinone oxidoreductase, using light energy to abstract electrons from H(2)O, generating a proton gradient subsequently used for ATP formation. This is Photosystem II reaction center protein Y from Picosynechococcus sp. (strain ATCC 27264 / PCC 7002 / PR-6) (Agmenellum quadruplicatum).